Here is a 603-residue protein sequence, read N- to C-terminus: Phosphoenolpyruvate carboxykinase [GTP] (603 aa).

Substrate-binding positions include arginine 87 and 209–211 (YAG). Mn(2+)-binding residues include lysine 218 and histidine 237. A substrate-binding site is contributed by serine 258. 259–264 (GSGKTS) lines the GTP pocket. Serine 260 is a catalytic residue. Position 275 (aspartate 275) interacts with Mn(2+). 365-367 (NAR) contacts substrate. Positions 367 and 398 each coordinate GTP.

It belongs to the phosphoenolpyruvate carboxykinase [GTP] family. It depends on Mn(2+) as a cofactor.

It is found in the cytoplasm. It catalyses the reaction oxaloacetate + GTP = phosphoenolpyruvate + GDP + CO2. Its pathway is carbohydrate biosynthesis; gluconeogenesis. Catalyzes the conversion of oxaloacetate (OAA) to phosphoenolpyruvate (PEP), the rate-limiting step in the metabolic pathway that produces glucose from lactate and other precursors derived from the citric acid cycle. The chain is Phosphoenolpyruvate carboxykinase [GTP] from Saccharolobus solfataricus (strain ATCC 35092 / DSM 1617 / JCM 11322 / P2) (Sulfolobus solfataricus).